The following is a 204-amino-acid chain: Large ribosomal subunit protein eL15 (204 aa).

This sequence belongs to the eukaryotic ribosomal protein eL15 family. As to quaternary structure, component of the large ribosomal subunit.

It localises to the cytoplasm. Functionally, component of the large ribosomal subunit. The ribosome is a large ribonucleoprotein complex responsible for the synthesis of proteins in the cell. In Mylopharyngodon piceus (Black carp), this protein is Large ribosomal subunit protein eL15 (rpl15).